A 526-amino-acid chain; its full sequence is MTGMPLHRALLKNFLGYAPDWYKLTIFCFLLVNPLLFYFVSPFWAGWLLVVEFIFTLGMALKCYPLQPGGLLALQAMLIGMTSPQQVWHEVTGNIEVLMLLVFMVAGIYFMKQLLLFVFTKLLLRIHSKALLSLAFCGAAAFLSAFLDALTVIAVVISVAIGFYGIYHRFASQQGGNEADISDDSALSSEEHRHTLEQFRAFLRSLLMHAGVGTALGGVMTMVGEPQNLIIAKSAGWDFVSFFLHMSPVTVPVFICGILTCVLVERFKLFGYGVNLPDNVRRVLEDYDRDMTEKRTPQDKVRLLVQAVIGVWLIVALAFHLAEVGLIGLSVIIMATAFCGVTEEHAIGKAFQDAMPFTALLTVFFAIVAVIIDQQLFSPIIRYVLQSSESSQLTQFYLFNGLLSSISDNVFVGSVYINEARSAFENGHISLSQFELLAVAINTGTNLPSVATPNGQAAFLFLLTSSLAPLIRLSYGRMVIMALPYTIVMTLVGLLCVEFTLVPFTDFLMNNHWISLPNLTLSGSHS.

11 helical membrane passes run 14-34 (FLGY…LVNP), 63-83 (CYPL…GMTS), 99-119 (MLLV…LFVF), 122-142 (LLLR…AAAF), 146-166 (FLDA…FYGI), 206-226 (LLMH…VGEP), 239-259 (FVSF…CGIL), 307-327 (AVIG…VGLI), 357-377 (FTAL…QQLF), 451-471 (ATPN…APLI), and 479-499 (VIMA…CVEF).

This sequence belongs to the NhaB Na(+)/H(+) (TC 2.A.34) antiporter family.

It localises to the cell inner membrane. It carries out the reaction 2 Na(+)(in) + 3 H(+)(out) = 2 Na(+)(out) + 3 H(+)(in). Functionally, na(+)/H(+) antiporter that extrudes sodium in exchange for external protons. In Pectobacterium carotovorum subsp. carotovorum (strain PC1), this protein is Na(+)/H(+) antiporter NhaB.